Consider the following 372-residue polypeptide: tRNA-specific 2-thiouridylase MnmA (372 aa).

Residues 11 to 18 (GMSGGVDS) and methionine 37 each bind ATP. The tract at residues 97 to 99 (NPD) is interaction with target base in tRNA. The Nucleophile role is filled by cysteine 102. Cysteines 102 and 199 form a disulfide. Glycine 126 lines the ATP pocket. The segment at 149-151 (KDQ) is interaction with tRNA. The Cysteine persulfide intermediate role is filled by cysteine 199. The interaction with tRNA stretch occupies residues 309-310 (RY).

Belongs to the MnmA/TRMU family.

Its subcellular location is the cytoplasm. It carries out the reaction S-sulfanyl-L-cysteinyl-[protein] + uridine(34) in tRNA + AH2 + ATP = 2-thiouridine(34) in tRNA + L-cysteinyl-[protein] + A + AMP + diphosphate + H(+). Catalyzes the 2-thiolation of uridine at the wobble position (U34) of tRNA, leading to the formation of s(2)U34. The chain is tRNA-specific 2-thiouridylase MnmA from Staphylococcus epidermidis (strain ATCC 35984 / DSM 28319 / BCRC 17069 / CCUG 31568 / BM 3577 / RP62A).